A 96-amino-acid polypeptide reads, in one-letter code: Large ribosomal subunit protein bL27 (96 aa).

Residues 1 to 9 constitute a propeptide that is removed on maturation; that stretch reads MLRLDLQFF.

Belongs to the bacterial ribosomal protein bL27 family. The N-terminus is cleaved by ribosomal processing cysteine protease Prp.

The polypeptide is Large ribosomal subunit protein bL27 (Anoxybacillus flavithermus (strain DSM 21510 / WK1)).